The chain runs to 741 residues: NAD(P)H-quinone oxidoreductase subunit 5, chloroplastic (741 aa).

16 helical membrane passes run 9–29 (WIIP…LLLF), 40–60 (WAFQ…NLSI), 89–109 (IDPL…MVLI), 125–145 (FAYM…SNLI), 147–167 (IYIF…FWFT), 185–205 (GDFG…SFEF), 219–239 (NEVN…GAIA), 258–278 (TPIS…FLVA), 283–303 (LFIV…ITVF), 327–347 (LGYM…FHLI), 354–374 (ALLF…VGYC), 396–416 (NSFL…CFWS), 425–445 (WLYS…TAFY), 549–569 (LFPI…GIPF), 605–625 (FFSV…YKPV), and 721–741 (YLFF…FFNL).

This sequence belongs to the complex I subunit 5 family. In terms of assembly, NDH is composed of at least 16 different subunits, 5 of which are encoded in the nucleus.

The protein localises to the plastid. The protein resides in the chloroplast thylakoid membrane. It carries out the reaction a plastoquinone + NADH + (n+1) H(+)(in) = a plastoquinol + NAD(+) + n H(+)(out). The catalysed reaction is a plastoquinone + NADPH + (n+1) H(+)(in) = a plastoquinol + NADP(+) + n H(+)(out). NDH shuttles electrons from NAD(P)H:plastoquinone, via FMN and iron-sulfur (Fe-S) centers, to quinones in the photosynthetic chain and possibly in a chloroplast respiratory chain. The immediate electron acceptor for the enzyme in this species is believed to be plastoquinone. Couples the redox reaction to proton translocation, and thus conserves the redox energy in a proton gradient. This is NAD(P)H-quinone oxidoreductase subunit 5, chloroplastic (ndhF) from Cichorium intybus (Chicory).